The primary structure comprises 418 residues: STAM-binding protein-like A (418 aa).

The interval 199–218 (PDVHGPPQASLSPQTPPAGA) is disordered. The MPN domain maps to 251–382 (LFVPAELCQR…LTDYGMDDVG (132 aa)). Residues His-329, His-331, Asp-342, His-344, Cys-384, His-390, and His-392 each coordinate Zn(2+). Positions 329-342 (HTHPTQTAFLSSVD) match the JAMM motif motif.

The protein belongs to the peptidase M67C family. Zn(2+) serves as cofactor.

Functionally, zinc metalloprotease that specifically cleaves 'Lys-63'-linked polyubiquitin chains. Does not cleave 'Lys-48'-linked polyubiquitin chains. Functions at the endosome and is able to oppose the ubiquitin-dependent sorting of receptors to lysosomes. The protein is STAM-binding protein-like A (stambpa) of Danio rerio (Zebrafish).